The following is a 242-amino-acid chain: ATP synthase subunit a (242 aa).

A run of 6 helical transmembrane segments spans residues 29-49 (SSIY…LAFY), 84-104 (FIPL…LGMT), 114-134 (IIVT…VGFV), 140-160 (FLTL…MIVI), 189-209 (VIAG…IPLM), and 210-230 (MILI…FTIL).

This sequence belongs to the ATPase A chain family. In terms of assembly, F-type ATPases have 2 components, CF(1) - the catalytic core - and CF(0) - the membrane proton channel. CF(1) has five subunits: alpha(3), beta(3), gamma(1), delta(1), epsilon(1). CF(0) has three main subunits: a(1), b(2) and c(9-12). The alpha and beta chains form an alternating ring which encloses part of the gamma chain. CF(1) is attached to CF(0) by a central stalk formed by the gamma and epsilon chains, while a peripheral stalk is formed by the delta and b chains.

Its subcellular location is the cell inner membrane. Key component of the proton channel; it plays a direct role in the translocation of protons across the membrane. The sequence is that of ATP synthase subunit a from Rickettsia massiliae (strain Mtu5).